The sequence spans 274 residues: Eukaryotic translation initiation factor 3 subunit G (274 aa).

The RRM domain maps to 192-270 (TAIRISNLSN…LILNVEWSKP (79 aa)).

The protein belongs to the eIF-3 subunit G family. In terms of assembly, component of the eukaryotic translation initiation factor 3 (eIF-3) complex.

It is found in the cytoplasm. In terms of biological role, RNA-binding component of the eukaryotic translation initiation factor 3 (eIF-3) complex, which is involved in protein synthesis of a specialized repertoire of mRNAs and, together with other initiation factors, stimulates binding of mRNA and methionyl-tRNAi to the 40S ribosome. The eIF-3 complex specifically targets and initiates translation of a subset of mRNAs involved in cell proliferation. This subunit can bind 18S rRNA. This Bombyx mori (Silk moth) protein is Eukaryotic translation initiation factor 3 subunit G.